The primary structure comprises 127 residues: Large ribosomal subunit protein bL12 (127 aa).

Positions 101-127 (VKTGVSKEEAEDAKKQLVESGAEVEIK) are disordered. Over residues 105–117 (VSKEEAEDAKKQL) the composition is skewed to basic and acidic residues.

It belongs to the bacterial ribosomal protein bL12 family. Homodimer. Part of the ribosomal stalk of the 50S ribosomal subunit. Forms a multimeric L10(L12)X complex, where L10 forms an elongated spine to which 2 to 4 L12 dimers bind in a sequential fashion. Binds GTP-bound translation factors.

Forms part of the ribosomal stalk which helps the ribosome interact with GTP-bound translation factors. Is thus essential for accurate translation. The polypeptide is Large ribosomal subunit protein bL12 (Geobacter metallireducens (strain ATCC 53774 / DSM 7210 / GS-15)).